Reading from the N-terminus, the 202-residue chain is Peptidyl-tRNA hydrolase (202 aa).

Tyr19 provides a ligand contact to tRNA. The Proton acceptor role is filled by His24. Positions 70, 72, and 118 each coordinate tRNA.

The protein belongs to the PTH family. As to quaternary structure, monomer.

It is found in the cytoplasm. It catalyses the reaction an N-acyl-L-alpha-aminoacyl-tRNA + H2O = an N-acyl-L-amino acid + a tRNA + H(+). In terms of biological role, hydrolyzes ribosome-free peptidyl-tRNAs (with 1 or more amino acids incorporated), which drop off the ribosome during protein synthesis, or as a result of ribosome stalling. Catalyzes the release of premature peptidyl moieties from peptidyl-tRNA molecules trapped in stalled 50S ribosomal subunits, and thus maintains levels of free tRNAs and 50S ribosomes. The protein is Peptidyl-tRNA hydrolase of Prochlorococcus marinus (strain NATL1A).